A 363-amino-acid chain; its full sequence is tRNA/tmRNA (uracil-C(5))-methyltransferase (363 aa).

S-adenosyl-L-methionine-binding residues include glutamine 187, tyrosine 215, asparagine 220, glutamate 236, and aspartate 296. Residue cysteine 321 is the Nucleophile of the active site. Glutamate 355 serves as the catalytic Proton acceptor.

It belongs to the class I-like SAM-binding methyltransferase superfamily. RNA M5U methyltransferase family. TrmA subfamily.

The catalysed reaction is uridine(54) in tRNA + S-adenosyl-L-methionine = 5-methyluridine(54) in tRNA + S-adenosyl-L-homocysteine + H(+). The enzyme catalyses uridine(341) in tmRNA + S-adenosyl-L-methionine = 5-methyluridine(341) in tmRNA + S-adenosyl-L-homocysteine + H(+). Dual-specificity methyltransferase that catalyzes the formation of 5-methyluridine at position 54 (m5U54) in all tRNAs, and that of position 341 (m5U341) in tmRNA (transfer-mRNA). The polypeptide is tRNA/tmRNA (uracil-C(5))-methyltransferase (Haemophilus influenzae (strain PittEE)).